A 286-amino-acid polypeptide reads, in one-letter code: MKHFSVKACAKINLGLLITSRRADGYHTLETIFAPIDWFDTLEFTESDAISMECSNLDLLVDDSNLCIRAAKALQEHTGVKRGATIKLLKRVPFGAGLGGGSSDAAATLNALCKLWQIDVPSAELHKLAVKLGADVPYFLEMKGLAYAAGIGEELEDLNLALPWHVVTVFPEVQVPTAWAYKNFHRQFERPVPDLKTLVRRLCHERDISVFGVFENDFASVVFEHYPVVREVRDALAASGAQFVSLSGSGSAVYALYEGRADAVKAAEAMSARFRINMTPAGFRME.

Lys11 is an active-site residue. Position 93-103 (93-103) interacts with ATP; that stretch reads PFGAGLGGGSS. Asp135 is an active-site residue.

This sequence belongs to the GHMP kinase family. IspE subfamily.

It carries out the reaction 4-CDP-2-C-methyl-D-erythritol + ATP = 4-CDP-2-C-methyl-D-erythritol 2-phosphate + ADP + H(+). The protein operates within isoprenoid biosynthesis; isopentenyl diphosphate biosynthesis via DXP pathway; isopentenyl diphosphate from 1-deoxy-D-xylulose 5-phosphate: step 3/6. In terms of biological role, catalyzes the phosphorylation of the position 2 hydroxy group of 4-diphosphocytidyl-2C-methyl-D-erythritol. The polypeptide is 4-diphosphocytidyl-2-C-methyl-D-erythritol kinase (Chlorobaculum tepidum (strain ATCC 49652 / DSM 12025 / NBRC 103806 / TLS) (Chlorobium tepidum)).